The primary structure comprises 88 residues: Probable small nuclear ribonucleoprotein F (88 aa).

Positions 7–79 constitute a Sm domain; it reads NPKPFLNNLT…VLYVRGVPED (73 aa).

Belongs to the snRNP Sm proteins family. SmF/LSm6 subfamily.

Its subcellular location is the nucleus. In terms of biological role, probable common Sm protein, is found in U1 and U2 snRNPs and may be part of the spliceosome. This chain is Probable small nuclear ribonucleoprotein F, found in Arabidopsis thaliana (Mouse-ear cress).